A 415-amino-acid chain; its full sequence is Serine hydroxymethyltransferase (415 aa).

Residues leucine 117 and glycine 121–leucine 123 contribute to the (6S)-5,6,7,8-tetrahydrofolate site. Lysine 226 is modified (N6-(pyridoxal phosphate)lysine).

Belongs to the SHMT family. Homodimer. The cofactor is pyridoxal 5'-phosphate.

The protein localises to the cytoplasm. The enzyme catalyses (6R)-5,10-methylene-5,6,7,8-tetrahydrofolate + glycine + H2O = (6S)-5,6,7,8-tetrahydrofolate + L-serine. It functions in the pathway one-carbon metabolism; tetrahydrofolate interconversion. It participates in amino-acid biosynthesis; glycine biosynthesis; glycine from L-serine: step 1/1. Functionally, catalyzes the reversible interconversion of serine and glycine with tetrahydrofolate (THF) serving as the one-carbon carrier. This reaction serves as the major source of one-carbon groups required for the biosynthesis of purines, thymidylate, methionine, and other important biomolecules. Also exhibits THF-independent aldolase activity toward beta-hydroxyamino acids, producing glycine and aldehydes, via a retro-aldol mechanism. This is Serine hydroxymethyltransferase from Dehalococcoides mccartyi (strain ATCC BAA-2100 / JCM 16839 / KCTC 5957 / BAV1).